Reading from the N-terminus, the 268-residue chain is Undecaprenyl-diphosphatase (268 aa).

The next 7 helical transmembrane spans lie at 5 to 25 (SIISALVLGLIEGLTEFIPVS), 43 to 63 (GNTFAVLIQLGAILAILLVYF), 84 to 104 (FSVLIAFLPAALIGAAAHGFI), 106 to 126 (AVLFETPMLICVVLIVGGVIL), 184 to 204 (AAEFSFFLAMPTMLGAFTLDL), 213 to 233 (FDDIGVIAIGFIAAFVAGIVV), and 248 to 268 (PFAIWRIVVGTAGLVGLWLVG).

Belongs to the UppP family.

It is found in the cell inner membrane. It carries out the reaction di-trans,octa-cis-undecaprenyl diphosphate + H2O = di-trans,octa-cis-undecaprenyl phosphate + phosphate + H(+). Its function is as follows. Catalyzes the dephosphorylation of undecaprenyl diphosphate (UPP). Confers resistance to bacitracin. The protein is Undecaprenyl-diphosphatase of Sinorhizobium fredii (strain NBRC 101917 / NGR234).